Reading from the N-terminus, the 723-residue chain is MNTLKLCLILYACLVLLPVRVMSADLSPASSERQPIYIEADHIDGHYQQEIEAIGNVRMRRGDQTLTADRVKYYQSNENVEVEGNAQLERPDDILWGSYLQMNLNDNTGQLSEPRYLQKDGNGRGDGNLLLLEGENQYRFKKARYTTCPEDDHDWYILADDLEIDKEKKVGTARHASVRFKDVPILYVPWMNFSFGNERKTGFLSPIMGNTSRSGVEVSVPFYWNIAPNYDATITPRLMSRRGVMLNNEFRYIGQTLNGRFLLDYLPNDLETDTTRYGMQLNHFHNLGAGWFGMINYNSASDRNYFRDLGNNILFTSQTNLLQQGFASYFRELGRNGTLTFSTLLQQFQTLQDPRAPIISPFKILPRFTLNAAKRNVYGLDFDFSGSFTHFSHSTLPHGLRTTFLPGVSLPLENSFGFIRPRVSLHHTRYDLNEPANPAANDKHLSRTVPIFSFDSGIVLERDTTLARENFVQTIEPRVFYTYIPYRDQQLLPNFDSAEMDFSYPQLFLERRFSGEDRINDANEITLAVSSRLIHSATGNERLRFSAGQRIRFSDRRVILTSPQVTRAGSDFIAELSGGITQNIKTDTGIQLNQNNFLIEKIRTGISYRPAPGKVINAGYRFTRDVLEQVDLSTQWPFLKKWQGFAAINYSLKDDKLLAGLLGLEYNACCWSLRFVTSHFTTATQRTSTNIFVQLELNDLMRIGTNPVRVLQQTIPGYMRTDL.

A signal peptide spans 1 to 23 (MNTLKLCLILYACLVLLPVRVMS).

It belongs to the LptD family. As to quaternary structure, component of the lipopolysaccharide transport and assembly complex. Interacts with LptE and LptA.

The protein resides in the cell outer membrane. In terms of biological role, together with LptE, is involved in the assembly of lipopolysaccharide (LPS) at the surface of the outer membrane. In Nitrosomonas europaea (strain ATCC 19718 / CIP 103999 / KCTC 2705 / NBRC 14298), this protein is LPS-assembly protein LptD.